The chain runs to 414 residues: Poly(3-hydroxyalkanoate) depolymerase C (414 aa).

The first 37 residues, 1–37, serve as a signal peptide directing secretion; it reads MLAKQIKKANSRSTLLRKSLLFAAPIILAVSSSSVYA. Ser154 serves as the catalytic Charge relay system.

Belongs to the AB hydrolase superfamily. Lipase family.

Its subcellular location is the secreted. In terms of biological role, specific for poly(hydroxyalkanoic acid) consisting of monomers of four or five carbon atoms and for P-nitrophenylbutyrate as substrates. The polypeptide is Poly(3-hydroxyalkanoate) depolymerase C (phaZ1) (Paucimonas lemoignei (Pseudomonas lemoignei)).